Reading from the N-terminus, the 1168-residue chain is ATP-dependent DNA helicase mph1 (1168 aa).

Composition is skewed to polar residues over residues 24 to 38 (NITSHHPSNSKQLAS) and 59 to 68 (PTVSQGQATA). A disordered region spans residues 24 to 132 (NITSHHPSNS…PFRADMPPEQ (109 aa)). Low complexity predominate over residues 71–88 (RAKTASKPTTSATTSRPS). Positions 89-104 (LAQSSQRKNLRQTTLW) are enriched in polar residues. The 169-residue stretch at 162 to 330 (IVKNGLFNNT…DVIDNLGISH (169 aa)) folds into the Helicase ATP-binding domain. 175-182 (LPTGLGKT) serves as a coordination point for ATP. Positions 278 to 281 (DEAH) match the DEAH box motif. Residues 506 to 665 (LVNHFMDAGE…GSRFTFRHDL (160 aa)) form the Helicase C-terminal domain. Disordered regions lie at residues 690–717 (SQNPELPEPKRSAARMRTKPAKKKFNMP) and 830–1168 (APAN…DDQE). Over residues 701–714 (SAARMRTKPAKKKF) the composition is skewed to basic residues. Residues 895–907 (TAKTKSTGVSKQT) show a composition bias toward polar residues. Residues 920–936 (DCEEGGNEYDGNVDDDE) show a composition bias toward acidic residues. Basic residues predominate over residues 941 to 959 (RNFRSKGRGRGSGRGKKSQ). The span at 985-996 (GSDDGADLEDFI) shows a compositional bias: acidic residues. Residues 1001–1030 (EVTSSLQHRPRGSTSPTTAPDAGSSSLSSK) are compositionally biased toward polar residues.

This sequence belongs to the DEAD box helicase family. DEAH subfamily. FANCM sub-subfamily. As to quaternary structure, interacts with the MHF histone-fold complex to form the FANCM-MHF complex.

It is found in the nucleus. It catalyses the reaction ATP + H2O = ADP + phosphate + H(+). In terms of biological role, ATP-dependent DNA helicase involved in DNA damage repair by homologous recombination and in genome maintenance. Capable of unwinding D-loops. Plays a role in limiting crossover recombinants during mitotic DNA double-strand break (DSB) repair. Component of a FANCM-MHF complex which promotes gene conversion at blocked replication forks, probably by reversal of the stalled fork. This is ATP-dependent DNA helicase mph1 from Neurospora crassa (strain ATCC 24698 / 74-OR23-1A / CBS 708.71 / DSM 1257 / FGSC 987).